Reading from the N-terminus, the 512-residue chain is Gustatory and odorant receptor 63a (512 aa).

Residues 1 to 24 (MRPSGEKVVKGHGQGNSGHSLSGM) are disordered. At 1–129 (MRPSGEKVVK…PARAKFEMNS (129 aa)) the chain is on the cytoplasmic side. Residues 130–150 (ASFIYSVVFFVLLACYVGYVA) traverse the membrane as a helical segment. At 151–166 (NNRIHIVRSLSGPFEE) the chain is on the extracellular side. A helical membrane pass occupies residues 167-187 (AVIAYLFLVNILPIMIIPILW). Residues 188 to 222 (YEARKIAKLFNDWDDFEVLYYQISGHSLPLKLRQK) are Cytoplasmic-facing. Residues 223–243 (AVYIAIVLPILSVLSVVITHV) traverse the membrane as a helical segment. Residues 244 to 265 (TMSDLNINQVVPYCILDNLTAM) are Extracellular-facing. Asn261 carries an N-linked (GlcNAc...) asparagine glycan. The helical transmembrane segment at 266–285 (LGAWWFLICEAMSITAHLLA) threads the bilayer. Residues 286 to 324 (ERFQKALKHIGPAAMVADYRVLWLRLSKLTRDTGNALCY) are Cytoplasmic-facing. The helical transmembrane segment at 325-345 (TFVFMSLYLFFIITLSIYGLM) threads the bilayer. The Extracellular segment spans residues 346 to 350 (SQLSE). Residues 351–371 (GFGIKDIGLTITALWNIGLLF) traverse the membrane as a helical segment. Residues 372–436 (YICDEAHYAS…FFDVNRTLFK (65 aa)) lie on the Cytoplasmic side of the membrane. The helical transmembrane segment at 437–457 (GLLTTMVTYLVVLLQFQISIP) threads the bilayer. Topologically, residues 458 to 512 (TDKGDSEGANNITVVDFVMDSLDNDMSLMGASTLSTTTVGTTLPPPIMKLKGRKG) are extracellular. N-linked (GlcNAc...) asparagine glycosylation is present at Asn468.

It belongs to the insect chemoreceptor superfamily. Gustatory receptor (GR) family. Gr21a subfamily. In terms of assembly, gr21a and Gr63a probably form a heterodimer that responds to CO(2). In terms of tissue distribution, expressed in the medial aspect of the third antennal segment. Carbon dioxide-responsive neurons coexpress Gr21a and Gr63a in a pair of chemosensory receptors at both larval and adult life stages.

The protein resides in the cell membrane. Gustatory and odorant receptor which mediates acceptance or avoidance behavior, depending on its substrates. Gr21a and Gr63a together are sufficient for carbon dioxide detection and avoidance behavior. It is possible that the CO(2) receptors Gr63a and Gr21a activate the TRPC channels through Galpha49B and Plc21C. This innate olfactory avoidance behavior can be inhibited by inhibitory interactions of the odors such as 1-hexanol and 2,3-butanedione with Gr21a and Gr63a. This Drosophila melanogaster (Fruit fly) protein is Gustatory and odorant receptor 63a (Gr63a).